A 510-amino-acid polypeptide reads, in one-letter code: UDP-N-acetylmuramoyl-tripeptide--D-alanyl-D-alanine ligase (510 aa).

136 to 142 is an ATP binding site; it reads GSSGKTS.

The protein belongs to the MurCDEF family. MurF subfamily.

The protein resides in the cytoplasm. The enzyme catalyses D-alanyl-D-alanine + UDP-N-acetyl-alpha-D-muramoyl-L-alanyl-gamma-D-glutamyl-meso-2,6-diaminopimelate + ATP = UDP-N-acetyl-alpha-D-muramoyl-L-alanyl-gamma-D-glutamyl-meso-2,6-diaminopimeloyl-D-alanyl-D-alanine + ADP + phosphate + H(+). It functions in the pathway cell wall biogenesis; peptidoglycan biosynthesis. In terms of biological role, involved in cell wall formation. Catalyzes the final step in the synthesis of UDP-N-acetylmuramoyl-pentapeptide, the precursor of murein. The polypeptide is UDP-N-acetylmuramoyl-tripeptide--D-alanyl-D-alanine ligase (Mycobacterium bovis (strain ATCC BAA-935 / AF2122/97)).